The chain runs to 493 residues: Voltage-gated potassium channel regulatory subunit KCNF1 (493 aa).

Residues 1–183 lie on the Cytoplasmic side of the membrane; the sequence is MDASAEQSLP…KPESSCPARV (183 aa). A helical transmembrane segment spans residues 184-204; that stretch reads VAVLSFLLILVSSVVMCMGTI. The Extracellular segment spans residues 205–223; sequence PELQVVDSEGNRVEHPTLE. A helical membrane pass occupies residues 224–244; the sequence is NVETACIGWFTLEYLLRLFSS. Residues 245–249 are Cytoplasmic-facing; that stretch reads PNKLH. A helical membrane pass occupies residues 250 to 270; sequence FALSFMNIVDVLAILPFYVSL. The Extracellular segment spans residues 271–289; that stretch reads TLTHLGARMMELTNVQQAV. A helical; Voltage-sensor transmembrane segment spans residues 290 to 310; that stretch reads QALRIMRIARIFKLARHSSGL. At 311–324 the chain is on the cytoplasmic side; the sequence is QTLTYALKRSFKEL. A helical membrane pass occupies residues 325–345; that stretch reads GLLLMYLAVGIFVFSALGYTM. At 346–357 the chain is on the extracellular side; sequence EQSHPETLFKSI. An intramembrane region (pore-forming) is located at residues 358-378; the sequence is PQSFWWAIITMTTVGYGDIYP. A Selectivity filter motif is present at residues 370 to 375; sequence TVGYGD. At 379-385 the chain is on the extracellular side; sequence KTTLGKL. Residues 386–406 traverse the membrane as a helical segment; that stretch reads NAAISFLCGVIAIALPIHPII. Residues 407 to 493 lie on the Cytoplasmic side of the membrane; that stretch reads NNFVRYYNKQ…HHRTRLQSCK (87 aa). Positions 433–468 are disordered; it reads NSSSAESKPGGSRSDLDTLPPEPAAREGPSWGSRLK.

It belongs to the potassium channel family. F (TC 1.A.1.2) subfamily. Kv5.1/KCNF1 sub-subfamily. In terms of assembly, heterotetramer with KCNB1 or KCNB2. As to expression, expressed in brain namely in the piriform cortex, olfactory tubercle, and medial habenular nucleus. Also expressed in the medial amygdaloid nuclei and the lateral amygdaloid area.

The protein resides in the cell membrane. Functionally, regulatory alpha-subunit of the voltage-gated potassium (Kv) channel which, when coassembled with KCNB1 or KCNB2, can modulate their expression and their gating kinetics by acting on deactivation upon repolarization and inactivation during maintained depolarization. Accelerates inactivation but has relatively little effect on deactivation. Coexpression with KCNB1 or KCNB2 markedly slows inactivation. Each modulatory subunit has its own specific properties of regulation, and can lead to extensive inhibitions, to large changes in kinetics, and/or to large shifts in the voltage dependencies of the inactivation process. The gating kinetics depends on the nature and stoichiometry of the associated regulatory sunbunit. Fails to produce a potassium current when expressed alone. The sequence is that of Voltage-gated potassium channel regulatory subunit KCNF1 from Rattus norvegicus (Rat).